The sequence spans 373 residues: Chaperone protein DnaJ (373 aa).

One can recognise a J domain in the interval 4–68 (NYYQILGVSK…QTRAAYDRLG (65 aa)). The segment at 136 to 214 (GIEKNISFSS…CHGMGRYHKQ (79 aa)) adopts a CR-type zinc-finger fold. Positions 149, 152, 166, 169, 188, 191, 202, and 205 each coordinate Zn(2+). 4 CXXCXGXG motif repeats span residues 149-156 (CDTCHGSG), 166-173 (CDACSGVG), 188-195 (CHKCQGNG), and 202-209 (CKKCHGMG).

Belongs to the DnaJ family. Homodimer. Zn(2+) serves as cofactor.

Its subcellular location is the cytoplasm. In terms of biological role, participates actively in the response to hyperosmotic and heat shock by preventing the aggregation of stress-denatured proteins and by disaggregating proteins, also in an autonomous, DnaK-independent fashion. Unfolded proteins bind initially to DnaJ; upon interaction with the DnaJ-bound protein, DnaK hydrolyzes its bound ATP, resulting in the formation of a stable complex. GrpE releases ADP from DnaK; ATP binding to DnaK triggers the release of the substrate protein, thus completing the reaction cycle. Several rounds of ATP-dependent interactions between DnaJ, DnaK and GrpE are required for fully efficient folding. Also involved, together with DnaK and GrpE, in the DNA replication of plasmids through activation of initiation proteins. The protein is Chaperone protein DnaJ of Rickettsia peacockii (strain Rustic).